An 88-amino-acid chain; its full sequence is Cell division topological specificity factor (88 aa).

Belongs to the MinE family.

Its function is as follows. Prevents the cell division inhibition by proteins MinC and MinD at internal division sites while permitting inhibition at polar sites. This ensures cell division at the proper site by restricting the formation of a division septum at the midpoint of the long axis of the cell. The protein is Cell division topological specificity factor of Herminiimonas arsenicoxydans.